A 349-amino-acid polypeptide reads, in one-letter code: Probable ethanolamine kinase (349 aa).

It belongs to the choline/ethanolamine kinase family.

Its subcellular location is the cytoplasm. The enzyme catalyses ethanolamine + ATP = phosphoethanolamine + ADP + H(+). Its pathway is phospholipid metabolism; phosphatidylethanolamine biosynthesis; phosphatidylethanolamine from ethanolamine: step 1/3. In terms of biological role, highly specific for ethanolamine phosphorylation. May be a rate-controlling step in phosphatidylethanolamine biosynthesis. This chain is Probable ethanolamine kinase (etnk), found in Nematostella vectensis (Starlet sea anemone).